Reading from the N-terminus, the 273-residue chain is Pyrroline-5-carboxylate reductase (273 aa).

This sequence belongs to the pyrroline-5-carboxylate reductase family.

The protein localises to the cytoplasm. It carries out the reaction L-proline + NADP(+) = (S)-1-pyrroline-5-carboxylate + NADPH + 2 H(+). The catalysed reaction is L-proline + NAD(+) = (S)-1-pyrroline-5-carboxylate + NADH + 2 H(+). Its pathway is amino-acid biosynthesis; L-proline biosynthesis; L-proline from L-glutamate 5-semialdehyde: step 1/1. In terms of biological role, catalyzes the reduction of 1-pyrroline-5-carboxylate (PCA) to L-proline. The sequence is that of Pyrroline-5-carboxylate reductase from Pseudomonas aeruginosa (strain ATCC 15692 / DSM 22644 / CIP 104116 / JCM 14847 / LMG 12228 / 1C / PRS 101 / PAO1).